The sequence spans 368 residues: Glutamate 5-kinase (368 aa).

Lys-13 contributes to the ATP binding site. Residues Ser-54, Asp-141, and Asn-153 each coordinate substrate. 173–174 (SD) provides a ligand contact to ATP. The region spanning 278 to 355 (KGSLRLDAGA…DEIPEILGYP (78 aa)) is the PUA domain.

It belongs to the glutamate 5-kinase family.

Its subcellular location is the cytoplasm. The catalysed reaction is L-glutamate + ATP = L-glutamyl 5-phosphate + ADP. It functions in the pathway amino-acid biosynthesis; L-proline biosynthesis; L-glutamate 5-semialdehyde from L-glutamate: step 1/2. Functionally, catalyzes the transfer of a phosphate group to glutamate to form L-glutamate 5-phosphate. The chain is Glutamate 5-kinase from Jannaschia sp. (strain CCS1).